The following is a 113-amino-acid chain: Large ribosomal subunit protein bL17 (113 aa).

This sequence belongs to the bacterial ribosomal protein bL17 family. As to quaternary structure, part of the 50S ribosomal subunit. Contacts protein L32.

This Clostridium botulinum (strain Alaska E43 / Type E3) protein is Large ribosomal subunit protein bL17.